We begin with the raw amino-acid sequence, 169 residues long: Large ribosomal subunit protein uL10 (169 aa).

The protein belongs to the universal ribosomal protein uL10 family. As to quaternary structure, part of the ribosomal stalk of the 50S ribosomal subunit. The N-terminus interacts with L11 and the large rRNA to form the base of the stalk. The C-terminus forms an elongated spine to which L12 dimers bind in a sequential fashion forming a multimeric L10(L12)X complex.

In terms of biological role, forms part of the ribosomal stalk, playing a central role in the interaction of the ribosome with GTP-bound translation factors. This Deinococcus geothermalis (strain DSM 11300 / CIP 105573 / AG-3a) protein is Large ribosomal subunit protein uL10.